The following is a 54-amino-acid chain: Large ribosomal subunit protein bL33C (54 aa).

Belongs to the bacterial ribosomal protein bL33 family.

This is Large ribosomal subunit protein bL33C from Streptomyces griseus subsp. griseus (strain JCM 4626 / CBS 651.72 / NBRC 13350 / KCC S-0626 / ISP 5235).